The chain runs to 112 residues: Small ribosomal subunit protein bS6c (112 aa).

This sequence belongs to the bacterial ribosomal protein bS6 family.

It is found in the plastid. Its subcellular location is the chloroplast. Binds together with bS18 to 16S ribosomal RNA. In Porphyra purpurea (Red seaweed), this protein is Small ribosomal subunit protein bS6c (rps6).